A 53-amino-acid polypeptide reads, in one-letter code: uncharacterized protein (53 aa).

The signal sequence occupies residues 1–19 (MKLLTILILFYSFFMNLQA).

This is an uncharacterized protein from Autographa californica nuclear polyhedrosis virus (AcMNPV).